A 114-amino-acid chain; its full sequence is MLSGARCRLASALRGTRAPPSAVARRCLHASGSRPLADRGKKTEEPPRDFDPALLEFLVCPLSKKPLRYEASTNELINEELGIAYPIIDGIPNMIPQAARMTRQSKKQEEVEQR.

The transit peptide at 1 to 35 directs the protein to the mitochondrion; the sequence is MLSGARCRLASALRGTRAPPSAVARRCLHASGSRP. A disordered region spans residues 14 to 49; it reads RGTRAPPSAVARRCLHASGSRPLADRGKKTEEPPRD. The segment covering 36-49 has biased composition (basic and acidic residues); the sequence is LADRGKKTEEPPRD. The TRM112 domain maps to 51–97; sequence DPALLEFLVCPLSKKPLRYEASTNELINEELGIAYPIIDGIPNMIPQ.

The protein belongs to the PREY family. In terms of assembly, interacts (via TRM112 domain) with NDUFAF5; the interaction is direct and stabilizes NDUFAF5 protein. Interacts with COQ5; the interaction is direct, stabilizes COQ5 protein and associates PYURF with COQ enzyme complex.

It localises to the mitochondrion. In mitochondria, S-adenosylmethionine-dependent methyltransferase chaperone that supports both coenzyme Q biosynthesis, by stabilizing its components, such as COQ5, and NADH:ubiquinone oxidoreductase complex (complex I, MT-ND1) assembly, by stabilizing complex I assembly factors, such as NDUFAF5. The protein is Protein preY, mitochondrial of Homo sapiens (Human).